The sequence spans 381 residues: Cyclic AMP-AMP-GMP synthase (381 aa).

ATP contacts are provided by Gln51, Ser53, Arg56, Asp69, Asp71, and Arg109. Catalysis depends on residues Asp69 and Asp71. The Mg(2+) site is built by Asp69 and Asp71. Residue Asp121 is part of the active site. Mg(2+) contacts are provided by Asp121 and Asp196. Positions 196, 197, 204, 205, 210, 233, and 250 each coordinate ATP. 2 residues coordinate Mg(2+): Asn258 and Leu260. ATP contacts are provided by Val304 and Arg307. Positions Gly348 to Ala381 are disordered.

This sequence belongs to the CD-NTase family. D02 subfamily. As to quaternary structure, monomer. Crystallizes as a Cap2 homodimer bound on each side by a CdnD monomer. Requires Mg(2+) as cofactor. Post-translationally, in bacteria expressing cap4-dncV-cap2-cap3, this protein is conjugated to a number of other proteins by Cap2, probably via this protein's C-terminal Ala residue. More conjugated DncV is found in the absence of Cap3.

The enzyme catalyses GTP + 2 ATP = 3',3',3'-cAAG + 3 diphosphate. Its activity is regulated as follows. Primed for activation by Cap2 which conjugates it to cellular proteins; activation is target protein-specific (green fluorescent protein does not activate the enzyme), but which protein(s) activate it is unclear. Functionally, cyclic nucleotide synthase (second messenger synthase) of a CBASS antivirus system. CBASS (cyclic oligonucleotide-based antiphage signaling system) provides immunity against bacteriophages. The CD-NTase protein (CdnD, this protein) synthesizes cyclic nucleotides in response to infection; these serve as specific second messenger signals. The signals activate a diverse range of effectors, leading to bacterial cell death and thus abortive phage infection. A type II-C(AAG) CBASS system. Cyclic trinucleotide synthase that catalyzes the synthesis of 3',3',3'-cyclic AMP-AMP-GMP (cAAG) as the major product, a second messenger for cell signal transduction. Uses ATP as the first donor nucleotide, followed by GTP. In terms of biological role, protects E.coli against phage T2 infection. When the cdnD-cap2-cap3-cap4 operon is introduced in E.coli there is a more than 10(3) decrease in the efficiency of T2 plaque formation. The operon does not protect against phage T5 and only about 10-fold against T7. Expression of cdnD-cap4 alone protects E.coli against phage T2 infection. This Enterobacter hormaechei subsp. hoffmannii (strain UCI 50) protein is Cyclic AMP-AMP-GMP synthase.